The following is a 501-amino-acid chain: Ribose import ATP-binding protein RbsA 1 (501 aa).

ABC transporter domains are found at residues 5-241 (LQLK…VGRK) and 252-495 (APGD…VGKL). 37 to 44 (GENGAGKS) lines the ATP pocket.

It belongs to the ABC transporter superfamily. Ribose importer (TC 3.A.1.2.1) family. As to quaternary structure, the complex is composed of an ATP-binding protein (RbsA), two transmembrane proteins (RbsC) and a solute-binding protein (RbsB).

It is found in the cell inner membrane. The catalysed reaction is D-ribose(out) + ATP + H2O = D-ribose(in) + ADP + phosphate + H(+). Part of the ABC transporter complex RbsABC involved in ribose import. Responsible for energy coupling to the transport system. This chain is Ribose import ATP-binding protein RbsA 1, found in Escherichia coli O157:H7.